A 921-amino-acid chain; its full sequence is Translation initiation factor IF-2 (921 aa).

The disordered stretch occupies residues 1-296; it reads MADQNTPGDK…PGPQKQRGRL (296 aa). A compositionally biased stretch (low complexity) spans 80-89; sequence RPSGPRPSGG. Basic and acidic residues predominate over residues 117 to 183; sequence ARVRDLEERR…AKKRFGEGEA (67 aa). Low complexity-rich tracts occupy residues 184-237 and 248-257; these read PRPA…ARPA and GRAPAAVAAG. One can recognise a tr-type G domain in the interval 417–586; that stretch reads PRSPVVTVMG…MIALQADILD (170 aa). Residues 426–433 are G1; it reads GHVDHGKT. Residue 426 to 433 participates in GTP binding; it reads GHVDHGKT. The segment at 451 to 455 is G2; sequence GITQH. A G3 region spans residues 474–477; the sequence is DTPG. Residues 474–478 and 528–531 contribute to the GTP site; these read DTPGH and NKID. Residues 528 to 531 are G4; that stretch reads NKID. Residues 564–566 form a G5 region; that stretch reads SAK.

It belongs to the TRAFAC class translation factor GTPase superfamily. Classic translation factor GTPase family. IF-2 subfamily.

Its subcellular location is the cytoplasm. Its function is as follows. One of the essential components for the initiation of protein synthesis. Protects formylmethionyl-tRNA from spontaneous hydrolysis and promotes its binding to the 30S ribosomal subunits. Also involved in the hydrolysis of GTP during the formation of the 70S ribosomal complex. The polypeptide is Translation initiation factor IF-2 (Bradyrhizobium sp. (strain ORS 278)).